Consider the following 131-residue polypeptide: Global transcriptional regulator Spx (131 aa).

Positions 10–13 (CTSC) match the CXXC motif. Cys-10 and Cys-13 are oxidised to a cystine.

Belongs to the ArsC family. Spx subfamily. As to quaternary structure, interacts with the C-terminal domain of the alpha subunit of the RNAP. A single Spx monomer interacts with RNAP to form the transcription activation complex. Interacts with the adapter protein SpxH/YjbH.

It localises to the cytoplasm. Its activity is regulated as follows. Under non-stress conditions, Spx is degraded by ClpXP and, to a lesser extent, by ClpCP. Efficient dedradation by ClpXP requires the adapter protein SpxH/YjbH. Binding to SpxH/YjbH reduces the overall conformational flexibility of Spx and stabilizes the C-terminal ClpX recognition region of Spx. In addition, activity is modulated by the formation of a disulfide bound within the N-terminal Cys-X-X-Cys (CXXC) motif, which is required for the transcriptional activation of trxA and trxB, or for the activation of msrAB operon expression following paraquat oxidative stress. However, it seems that formation of the disulfide bound is not essential for induction of all Spx-controlled genes, as for example the case of BSH biosynthesis genes. Similarly, induction of the Spx regulon during cell wall stress is not accompanied by oxidation of the disulfide switch, but requires Spx stabilization by the anti-adapter protein SpxO/YirB. Global transcriptional regulator that plays a key role in stress response and exerts either positive or negative regulation of genes. Acts by interacting with the C-terminal domain of the alpha subunit of the RNA polymerase (RNAP). This interaction can enhance binding of RNAP to the promoter region of target genes and stimulate their transcription, or block interaction of RNAP with activator proteins and repress transcription. Exhibits no DNA-binding activity. Its function is as follows. Induces the expression of a large number of genes in response to a variety of stress conditions, such as disulfide, heat and cell wall stress, while concurrently repressing transcription of genes involved in various developmental and growth-related pathways during periods of extreme stress. Functions in the oxidative stress response via induction of the transcription of thioredoxin (trxA) and thioredoxin reductase (trxB) during thiol-specific oxidative (disulfide) stress. Mediates response to oxidative stress caused by paraquat (PQ) via induction of the methionine sulfoxide reductase genes, msrA and msrB. Also acts as a transcriptional activator of the bacillithiol (BSH) biosynthesis genes in response to oxidizing conditions and thio-reactive compounds. Involved in heat stress response and thermotolerance development, which results in diminished cellular protein aggregates. Plays an important adaptive role in the cell wall stress response. Participates in sulfate-dependent control of organosulfur metabolism. Negatively controls, via CymR, the expression of the organosulfur utilization operons ytmI, yxeI and ssu, and directly activates yrrT operon expression during growth in medium containing methionine as sole sulfur source. Negatively affects competence and sporulation. Inhibits biofilm formation in response to disulfide stress by repressing biofilm matrix genes. This chain is Global transcriptional regulator Spx, found in Bacillus subtilis (strain 168).